Here is a 246-residue protein sequence, read N- to C-terminus: Acetoacetate decarboxylase (246 aa).

The Schiff-base intermediate with acetoacetate role is filled by K115.

Belongs to the ADC family.

The catalysed reaction is acetoacetate + H(+) = acetone + CO2. Catalyzes the conversion of acetoacetate to acetone and carbon dioxide. This chain is Acetoacetate decarboxylase, found in Clostridium beijerinckii (strain ATCC 51743 / NCIMB 8052) (Clostridium acetobutylicum).